A 907-amino-acid polypeptide reads, in one-letter code: Leucine-rich repeat-containing G-protein coupled receptor 5 (907 aa).

An N-terminal signal peptide occupies residues 1-21; it reads MDTSRVRMLLSLLALLQLVAA. Topologically, residues 22-561 are extracellular; the sequence is GSPPRPDTMP…EHLFGSWLIR (540 aa). An LRRNT domain is found at 33-64; the sequence is GCPSYCHCELDGRMLLRVDCSDLGLSELPSNL. Intrachain disulfides connect Cys34–Cys40 and Cys38–Cys52. LRR repeat units lie at residues 44 to 64, 65 to 88, 89 to 112, 114 to 136, 137 to 160, 162 to 184, 186 to 208, 209 to 232, 233 to 256, 257 to 279, 281 to 303, 304 to 327, 328 to 350, 351 to 375, 377 to 396, 397 to 420, and 422 to 444; these read GRML…PSNL, SVFT…LLHR, LRFL…AFAG, HSLK…ALQN, LRSL…CFSG, HSLR…AFRS, SALQ…AFGN, LSSL…CFDG, LHSL…IKTL, SNLK…AFVG, PSLI…AFQH, LPEL…LTGT, ATLE…VCDQ, LPNL…GCQK, QKID…TFQQ, LFNL…AFST, and PSLI…GLHG. N-linked (GlcNAc...) asparagine glycosylation is found at Asn63 and Asn77. An N-linked (GlcNAc...) asparagine glycan is attached at Asn208. Cys348 and Cys373 form a disulfide bridge. An intrachain disulfide couples Cys479 to Cys541. The chain crosses the membrane as a helical span at residues 562-582; it reads IGVWTTAVLALSCNALVAFTV. An LRR 18 repeat occupies 564 to 585; the sequence is VWTTAVLALSCNALVAFTVFRT. The Cytoplasmic segment spans residues 583-595; sequence FRTPLYISSIKLL. The helical transmembrane segment at 596 to 616 threads the bilayer; sequence IGVIAVVDILMGVSSAILAVV. Over 617 to 638 the chain is Extracellular; that stretch reads DTFTFGSFAQHGAWWEGGIGCQ. An intrachain disulfide couples Cys637 to Cys712. Residues 639 to 659 traverse the membrane as a helical segment; that stretch reads IVGFLSIFASESSVFLLTLAA. Residues 660–682 lie on the Cytoplasmic side of the membrane; it reads LERGFSVKCSSKFEMKAPLSSLK. A helical membrane pass occupies residues 683–703; it reads AIILLCVLLALTIATVPLLGG. The Extracellular segment spans residues 704 to 723; sequence SEYNASPLCLPLPFGEPSTT. Residues 724-744 form a helical membrane-spanning segment; the sequence is GYMVALVLLNSLCFLIMTIAY. Residues 745-775 are Cytoplasmic-facing; it reads TRLYCSLEKGELENLWDCSMVKHTALLLFTN. A helical transmembrane segment spans residues 776 to 796; sequence CILYCPVAFLSFSSLLNLTFI. Residues 797-802 lie on the Extracellular side of the membrane; it reads SPEVIK. A helical transmembrane segment spans residues 803-823; that stretch reads FILLVIVPLPACLNPLLYIVF. Topologically, residues 824–907 are cytoplasmic; sequence NPHFKEDMGS…LSSVAFVPCL (84 aa).

The protein belongs to the G-protein coupled receptor 1 family. Identified in a complex composed of RNF43, LGR5 and RSPO1. Also interacts with other R-spondin ligands, including RSPO2, RSPO3 and RSPO4.

Its subcellular location is the cell membrane. It is found in the golgi apparatus. The protein localises to the trans-Golgi network membrane. Receptor for R-spondins that potentiates the canonical Wnt signaling pathway and acts as a stem cell marker of the intestinal epithelium and the hair follicle. Upon binding to R-spondins (RSPO1, RSPO2, RSPO3 or RSPO4), associates with phosphorylated LRP6 and frizzled receptors that are activated by extracellular Wnt receptors, triggering the canonical Wnt signaling pathway to increase expression of target genes. In contrast to classical G-protein coupled receptors, does not activate heterotrimeric G-proteins to transduce the signal. Involved in the development and/or maintenance of the adult intestinal stem cells during postembryonic development. The polypeptide is Leucine-rich repeat-containing G-protein coupled receptor 5 (Lgr5) (Rattus norvegicus (Rat)).